A 459-amino-acid polypeptide reads, in one-letter code: Vitronectin (459 aa).

The signal sequence occupies residues 1 to 19; sequence MAPLRPLLMLALLAWVALA. Residues 20 to 63 form the SMB domain; the sequence is DQESCKGRCTDGFIAERKCQCDELCSYYQSCCTDYVAECKPQVT. Disulfide bonds link Cys-24–Cys-28, Cys-24–Cys-40, Cys-28–Cys-58, Cys-38–Cys-40, Cys-38–Cys-51, Cys-44–Cys-50, and Cys-51–Cys-58. The short motif at 64–66 is the Cell attachment site element; that stretch reads RGD. Residues Tyr-75, Tyr-78, and Tyr-80 each carry the sulfotyrosine modification. N-linked (GlcNAc...) asparagine glycans are attached at residues Asn-87 and Asn-146. Hemopexin repeat units lie at residues 135 to 179, 180 to 227, and 228 to 285; these read GKPF…VWGI, KGPI…FKGI, and PDDV…FALM. A phosphoserine mark is found at Ser-289 and Ser-378. A disordered region spans residues 338 to 380; sequence LKPSQPKMTKSARRSGKRYRSRRGRGRGRGHSRSQKSHRQSRS. Over residues 347 to 378 the composition is skewed to basic residues; it reads KSARRSGKRYRSRRGRGRGRGHSRSQKSHRQS. Sulfotyrosine occurs at positions 398 and 401. The Hemopexin 4 repeat unit spans residues 400–453; the sequence is DYKMDWLVPATCEPIQSVYFFSGEEYYRVNLRTQRVDTVTPPYPRSIAQYWLGC.

In terms of assembly, monomer. Interacts with SERPINE1/PAI1 and C1QBP. Post-translationally, sulfated on tyrosine residues. N- and O-glycosylated. In terms of processing, it has been suggested that the active SMB domain may be permitted considerable disulfide bond heterogeneity or variability, thus two alternate disulfide patterns based on 3D structures are described with 1 disulfide bond conserved in both. In terms of tissue distribution, plasma.

It is found in the secreted. The protein resides in the extracellular space. In terms of biological role, vitronectin is a cell adhesion and spreading factor found in serum and tissues. Vitronectin interact with glycosaminoglycans and proteoglycans. Is recognized by certain members of the integrin family and serves as a cell-to-substrate adhesion molecule. Inhibitor of the membrane-damaging effect of the terminal cytolytic complement pathway. The sequence is that of Vitronectin (VTN) from Sus scrofa (Pig).